Consider the following 344-residue polypeptide: MSSSTDARRQEVLRAIVADYIASQSPVGSKALLERYQLGVSSATIRNDMAVLEAEGLIAQEHASSGRVPTQKGYRQFVDTLHDVKPLSKAERRAMLTFLEGGVDLEDVLRRSVQLLAQVTKQAAVVQLPNLKVSRVKHCEVVALSPVRLLLVLITDNGRVDQRNVELDDVIDPEQTHRLRDILNTALEGKTLTEASVELAALVDDSPADIRPHLLKAATTLIETLVEQPSDRLIMAGTSNLTRVALTEGLPSIIEALEEQVVVLKLLARVPDLGNVSVSIGEENEADELRQTSVVATRYGFGTGSEAAALGGLGVVGPTYMDYSGTISKVSAVARYVSEILAGE.

It belongs to the HrcA family.

Functionally, negative regulator of class I heat shock genes (grpE-dnaK-dnaJ and groELS operons). Prevents heat-shock induction of these operons. This chain is Heat-inducible transcription repressor HrcA, found in Corynebacterium aurimucosum (strain ATCC 700975 / DSM 44827 / CIP 107346 / CN-1) (Corynebacterium nigricans).